A 501-amino-acid chain; its full sequence is Glucose-6-phosphate isomerase (501 aa).

Residues 78-101 (GIANPTENRAAEHSAERGDGAPES) form a disordered region. Basic and acidic residues predominate over residues 86-97 (RAAEHSAERGDG). The active-site Proton donor is the E333. Catalysis depends on residues H364 and K474.

The protein belongs to the GPI family.

Its subcellular location is the cytoplasm. The catalysed reaction is alpha-D-glucose 6-phosphate = beta-D-fructose 6-phosphate. Its pathway is carbohydrate biosynthesis; gluconeogenesis. It functions in the pathway carbohydrate degradation; glycolysis; D-glyceraldehyde 3-phosphate and glycerone phosphate from D-glucose: step 2/4. Catalyzes the reversible isomerization of glucose-6-phosphate to fructose-6-phosphate. This is Glucose-6-phosphate isomerase from Sphingopyxis alaskensis (strain DSM 13593 / LMG 18877 / RB2256) (Sphingomonas alaskensis).